The chain runs to 321 residues: tRNA uridine(34) hydroxylase (321 aa).

One can recognise a Rhodanese domain in the interval 135–233 (DDPDTLVIDT…YLEQVPEEES (99 aa)). The active-site Cysteine persulfide intermediate is the Cys193. The segment at 301-321 (RQRQMDQLSSASSKKSDDFSL) is disordered.

It belongs to the TrhO family.

It carries out the reaction uridine(34) in tRNA + AH2 + O2 = 5-hydroxyuridine(34) in tRNA + A + H2O. Catalyzes oxygen-dependent 5-hydroxyuridine (ho5U) modification at position 34 in tRNAs. This is tRNA uridine(34) hydroxylase from Parasynechococcus marenigrum (strain WH8102).